The chain runs to 557 residues: 2-isopropylmalate synthase (557 aa).

Residues Pro-33–Asp-307 form the Pyruvate carboxyltransferase domain. Mg(2+)-binding residues include Asp-42, His-246, His-248, and Asn-282. The regulatory domain stretch occupies residues Ala-439 to Ala-557.

It belongs to the alpha-IPM synthase/homocitrate synthase family. LeuA type 2 subfamily. Homodimer. Mg(2+) is required as a cofactor.

It localises to the cytoplasm. The enzyme catalyses 3-methyl-2-oxobutanoate + acetyl-CoA + H2O = (2S)-2-isopropylmalate + CoA + H(+). The protein operates within amino-acid biosynthesis; L-leucine biosynthesis; L-leucine from 3-methyl-2-oxobutanoate: step 1/4. Functionally, catalyzes the condensation of the acetyl group of acetyl-CoA with 3-methyl-2-oxobutanoate (2-ketoisovalerate) to form 3-carboxy-3-hydroxy-4-methylpentanoate (2-isopropylmalate). The polypeptide is 2-isopropylmalate synthase (Azotobacter vinelandii (strain DJ / ATCC BAA-1303)).